Here is a 292-residue protein sequence, read N- to C-terminus: Ephrin type-A receptor 4a (292 aa).

Residues 1 to 9 and lysine 27 each bind ATP; that span reads IGIGEFGEV. Positions 1 to 265 constitute a Protein kinase domain; it reads IGIGEFGEVC…QIVNMLDKLI (265 aa). Aspartate 120 acts as the Proton acceptor in catalysis. The residue at position 153 (tyrosine 153) is a Phosphotyrosine; by autocatalysis.

It belongs to the protein kinase superfamily. Tyr protein kinase family. Ephrin receptor subfamily. In terms of tissue distribution, widely expressed in the developing nervous system.

Its subcellular location is the cell membrane. It localises to the early endosome. The catalysed reaction is L-tyrosyl-[protein] + ATP = O-phospho-L-tyrosyl-[protein] + ADP + H(+). Its function is as follows. Receptor tyrosine kinase which binds membrane-bound ephrin family ligands residing on adjacent cells, leading to contact-dependent bidirectional signaling into neighboring cells. The signaling pathway downstream of the receptor is referred to as forward signaling while the signaling pathway downstream of the ephrin ligand is referred to as reverse signaling. Highly promiscuous, it has the unique property among Eph receptors to bind and to be physiologically activated by both GPI-anchored ephrin-A and transmembrane ephrin-B ligands including efna1 and efnb3. Upon activation by ephrin ligands, modulates cell morphology and integrin-dependent cell adhesion through regulation of the Rac, Rap and Rho GTPases activity. Plays an important role in the development of the nervous system controlling different steps of axonal guidance including the establishment of the corticospinal projections. This chain is Ephrin type-A receptor 4a (epha4a), found in Danio rerio (Zebrafish).